The sequence spans 211 residues: Mediator of RNA polymerase II transcription subunit 18 (211 aa).

It belongs to the Mediator complex subunit 18 family. As to quaternary structure, component of the Mediator complex.

It localises to the nucleus. Functionally, component of the Mediator complex, a coactivator involved in the regulated transcription of nearly all RNA polymerase II-dependent genes. Mediator functions as a bridge to convey information from gene-specific regulatory proteins to the basal RNA polymerase II transcription machinery. Mediator is recruited to promoters by direct interactions with regulatory proteins and serves as a scaffold for the assembly of a functional preinitiation complex with RNA polymerase II and the general transcription factors. This is Mediator of RNA polymerase II transcription subunit 18 (MED18) from Anopheles gambiae (African malaria mosquito).